We begin with the raw amino-acid sequence, 121 residues long: Large ribosomal subunit protein bL12 (121 aa).

Belongs to the bacterial ribosomal protein bL12 family. As to quaternary structure, homodimer. Part of the ribosomal stalk of the 50S ribosomal subunit. Forms a multimeric L10(L12)X complex, where L10 forms an elongated spine to which 2 to 4 L12 dimers bind in a sequential fashion. Binds GTP-bound translation factors.

Its function is as follows. Forms part of the ribosomal stalk which helps the ribosome interact with GTP-bound translation factors. Is thus essential for accurate translation. The polypeptide is Large ribosomal subunit protein bL12 (Pseudomonas fluorescens (strain Pf0-1)).